The sequence spans 289 residues: Protoheme IX farnesyltransferase (289 aa).

The next 9 helical transmembrane spans lie at 9-29 (VALM…PVMM), 35-55 (MPSL…AGSA), 89-109 (LTFG…LVNW), 110-130 (PSAL…TLGL), 138-158 (IVIG…AVTG), 164-184 (AVLL…ALAM), 188-208 (DDYA…EVVT), 228-248 (VAHT…WFLA), and 269-289 (FHMS…TAVV).

It belongs to the UbiA prenyltransferase family. Protoheme IX farnesyltransferase subfamily.

The protein localises to the cell membrane. The catalysed reaction is heme b + (2E,6E)-farnesyl diphosphate + H2O = Fe(II)-heme o + diphosphate. Its pathway is porphyrin-containing compound metabolism; heme O biosynthesis; heme O from protoheme: step 1/1. In terms of biological role, converts heme B (protoheme IX) to heme O by substitution of the vinyl group on carbon 2 of heme B porphyrin ring with a hydroxyethyl farnesyl side group. The chain is Protoheme IX farnesyltransferase from Frankia alni (strain DSM 45986 / CECT 9034 / ACN14a).